The primary structure comprises 507 residues: F-box only protein 31 (507 aa).

A disordered region spans residues 19–42; that stretch reads RQQRRGPAETAAADSEADTDPEEE. Phosphoserine is present on S33. The span at 33-42 shows a compositional bias: acidic residues; it reads SEADTDPEEE. Phosphothreonine is present on T37. The short motif at 50 to 55 is the D box element; it reads RCSLLE. Positions 50-96 constitute an F-box domain; it reads RCSLLELPPELLVEIFASLPGTDLPSLAQVCSRFRRILHTDTIWRRR. Zn(2+)-binding residues include C192, H200, C216, and H222. Position 264 is a phosphoserine; by ATM (S264). The DDL motif signature appears at 283 to 285; it reads DDL. A disordered region spans residues 366 to 417; the sequence is EQEAGEGAAPPREPSAKAADGPPAKDGKEPGGGAEAAEQSASSGQGQPFVLP. Over residues 400–412 the composition is skewed to low complexity; that stretch reads EAAEQSASSGQGQ. S448 carries the post-translational modification Phosphoserine.

Belongs to the FBXO31 family. As to quaternary structure, part of a SCF (SKP1-cullin-F-box) protein ligase complex SCF(FBXO31) composed of CUL1, SKP1, RBX1 and FBXO31. Interacts (when phosphorylated at Ser-33) with CDC20, promoting ubiquitination by the APC/C complex. Post-translationally, phosphorylation at Ser-264 by ATM following gamma-irradiation results in its stabilization. Phosphorylation at Ser-448 in absence of stress promotes its ubiquitination and degradation by the SCF(FBXO46) complex. Phosphorylation at Ser-33 by AKT1 promotes association with CDC20 and ubiquitination by the APC/C complex. Ubiquitinated by the SCF(FBXO46) complex in absence of stress, promoting its degradation. Ubiquitinated by the APC/C complex following phosphorylation at Ser-33, leading to its degradation by the proteasome.

The protein localises to the cytoplasm. Its subcellular location is the cytoskeleton. It localises to the microtubule organizing center. It is found in the centrosome. It participates in protein modification; protein ubiquitination. Functionally, substrate-recognition component of the SCF(FBXO31) protein ligase complex, which specifically mediates the ubiquitination of proteins amidated at their C-terminus in response to oxidative stress, leading to their degradation by the proteasome. FBXO31 specifically recognizes and binds C-terminal peptides bearing an amide: C-terminal amidation in response to oxidative stress takes place following protein fragmentation. The SCF(FBXO31) also plays a role in G1 arrest following DNA damage by mediating ubiquitination of phosphorylated cyclin-D1 (CCND1), promoting its degradation by the proteasome, resulting in G1 arrest. The SCF(FBXO31) complex is however not a major regulator of CCND1 stability during the G1/S transition. In response to genotoxic stress, the SCF(FBXO31) complex directs ubiquitination and degradation of phosphorylated MDM2, thereby promoting p53/TP53-mediated DNA damage response. SCF(FBXO31) complex is required for genomic integrity by catalyzing ubiquitination and degradation of cyclin-A (CCNA1 and/or CCNA2) during the G1 phase. In response to genotoxic stress, the SCF(FBXO31) complex directs ubiquitination and degradation of phosphorylated FBXO46 and MAP2K6. SCF(FBXO31) complex promotes ubiquitination and degradation of CDT1 during the G2 phase to prevent re-replication. The SCF(FBXO31) complex also mediates ubiquitination and degradation of DUSP6, OGT and PARD6A. In Mus musculus (Mouse), this protein is F-box only protein 31.